The chain runs to 229 residues: Large ribosomal subunit protein uL1 (229 aa).

It belongs to the universal ribosomal protein uL1 family. Part of the 50S ribosomal subunit.

Functionally, binds directly to 23S rRNA. The L1 stalk is quite mobile in the ribosome, and is involved in E site tRNA release. Protein L1 is also a translational repressor protein, it controls the translation of the L11 operon by binding to its mRNA. The chain is Large ribosomal subunit protein uL1 from Latilactobacillus sakei subsp. sakei (strain 23K) (Lactobacillus sakei subsp. sakei).